We begin with the raw amino-acid sequence, 134 residues long: MSWQAYVDDHLMCDIEGHEDHRLTAAAIVGHDGSVWAQSATFPQFKPVEMNGIMTDFNEPGHLAPTGLHLGGTKYMVIQGEAGAVIRGKKGSGGITIKKTGQALVFGIYEEPVTPGQCNMVVERLGDYLIEQGL.

Residues Cys13 and Cys118 are joined by a disulfide bond. The short motif at 84 to 100 (AVIRGKKGSGGITIKKT) is the Involved in PIP2 interaction element. The residue at position 114 (Thr114) is a Phosphothreonine.

This sequence belongs to the profilin family. As to quaternary structure, occurs in many kinds of cells as a complex with monomeric actin in a 1:1 ratio. Phosphorylated by MAP kinases.

The protein localises to the cytoplasm. The protein resides in the cytoskeleton. Functionally, binds to actin and affects the structure of the cytoskeleton. At high concentrations, profilin prevents the polymerization of actin, whereas it enhances it at low concentrations. This chain is Profilin-4, found in Olea europaea (Common olive).